Consider the following 86-residue polypeptide: Large ribosomal subunit protein bL27 (86 aa).

Over residues 1–10 the composition is skewed to gly residues; the sequence is MAQKKGGGST. Residues 1 to 20 are disordered; it reads MAQKKGGGSTRNGRDSESKR.

Belongs to the bacterial ribosomal protein bL27 family.

This chain is Large ribosomal subunit protein bL27, found in Bordetella avium (strain 197N).